Consider the following 104-residue polypeptide: Integration host factor subunit alpha (104 aa).

This sequence belongs to the bacterial histone-like protein family. Heterodimer of an alpha and a beta chain.

In terms of biological role, this protein is one of the two subunits of integration host factor, a specific DNA-binding protein that functions in genetic recombination as well as in transcriptional and translational control. The sequence is that of Integration host factor subunit alpha from Methylobacterium sp. (strain 4-46).